The primary structure comprises 337 residues: Lipoyl synthase (337 aa).

The [4Fe-4S] cluster site is built by cysteine 81, cysteine 86, cysteine 92, cysteine 107, cysteine 111, cysteine 114, and serine 323. Residues 93–312 (FSHGTATFMI…EDYGNALGFS (220 aa)) form the Radical SAM core domain.

It belongs to the radical SAM superfamily. Lipoyl synthase family. The cofactor is [4Fe-4S] cluster.

The protein localises to the cytoplasm. It catalyses the reaction [[Fe-S] cluster scaffold protein carrying a second [4Fe-4S](2+) cluster] + N(6)-octanoyl-L-lysyl-[protein] + 2 oxidized [2Fe-2S]-[ferredoxin] + 2 S-adenosyl-L-methionine + 4 H(+) = [[Fe-S] cluster scaffold protein] + N(6)-[(R)-dihydrolipoyl]-L-lysyl-[protein] + 4 Fe(3+) + 2 hydrogen sulfide + 2 5'-deoxyadenosine + 2 L-methionine + 2 reduced [2Fe-2S]-[ferredoxin]. It functions in the pathway protein modification; protein lipoylation via endogenous pathway; protein N(6)-(lipoyl)lysine from octanoyl-[acyl-carrier-protein]: step 2/2. Its function is as follows. Catalyzes the radical-mediated insertion of two sulfur atoms into the C-6 and C-8 positions of the octanoyl moiety bound to the lipoyl domains of lipoate-dependent enzymes, thereby converting the octanoylated domains into lipoylated derivatives. The sequence is that of Lipoyl synthase from Xanthomonas campestris pv. campestris (strain B100).